The following is a 361-amino-acid chain: 3-dehydroquinate synthase (361 aa).

Residues 72 to 77, 130 to 131, K142, and K151 each bind NAD(+); these read SGEKEK and TT. The Zn(2+) site is built by E184, H247, and H264.

Belongs to the sugar phosphate cyclases superfamily. Dehydroquinate synthase family. It depends on Co(2+) as a cofactor. Requires Zn(2+) as cofactor. NAD(+) is required as a cofactor.

It localises to the cytoplasm. It catalyses the reaction 7-phospho-2-dehydro-3-deoxy-D-arabino-heptonate = 3-dehydroquinate + phosphate. It participates in metabolic intermediate biosynthesis; chorismate biosynthesis; chorismate from D-erythrose 4-phosphate and phosphoenolpyruvate: step 2/7. In terms of biological role, catalyzes the conversion of 3-deoxy-D-arabino-heptulosonate 7-phosphate (DAHP) to dehydroquinate (DHQ). In Bacillus cereus (strain AH820), this protein is 3-dehydroquinate synthase.